We begin with the raw amino-acid sequence, 493 residues long: Acetylcholine receptor subunit beta (493 aa).

The signal sequence occupies residues 1–24 (MENVRRMALGLVVMMALALSGVGA). The Extracellular segment spans residues 25–240 (SVMEDTLLSV…VTFYLIIQRK (216 aa)). Cys-152 and Cys-166 are disulfide-bonded. Residue Asn-165 is glycosylated (N-linked (GlcNAc...) asparagine). 3 helical membrane passes run 241-265 (PLFY…VFYL), 273-291 (MSLS…LLLA), and 307-328 (YLMF…VLNL). Residues 329-461 (HHRSPNTHTM…WQYVAMVADR (133 aa)) are Cytoplasmic-facing. Tyr-379 carries the post-translational modification Phosphotyrosine; by Tyr-kinases. Residues 462-480 (LFLYVFFVICSIGTFSIFL) form a helical membrane-spanning segment.

This sequence belongs to the ligand-gated ion channel (TC 1.A.9) family. Acetylcholine receptor (TC 1.A.9.1) subfamily. Beta-1/CHRNB1 sub-subfamily. As to quaternary structure, pentamer of two alpha chains, and one each of the beta, delta, and gamma chains.

It is found in the postsynaptic cell membrane. The protein resides in the cell membrane. The enzyme catalyses K(+)(in) = K(+)(out). It catalyses the reaction Na(+)(in) = Na(+)(out). In terms of biological role, after binding acetylcholine, the AChR responds by an extensive change in conformation that affects all subunits and leads to opening of an ion-conducting channel across the plasma membrane. This is Acetylcholine receptor subunit beta (CHRNB1) from Tetronarce californica (Pacific electric ray).